The chain runs to 2298 residues: Protein Ycf2 (2298 aa).

1652–1659 (GSIGTGRS) serves as a coordination point for ATP.

This sequence belongs to the Ycf2 family.

It localises to the plastid. The protein resides in the chloroplast stroma. Functionally, probable ATPase of unknown function. Its presence in a non-photosynthetic plant (Epifagus virginiana) and experiments in tobacco indicate that it has an essential function which is probably not related to photosynthesis. The polypeptide is Protein Ycf2 (Aethionema cordifolium (Lebanon stonecress)).